The following is a 724-amino-acid chain: MTELAPSLVELARRFGIATEYTDWTGRQVLVSEATLVAALAALGVPAQTEQQRNDALAAQLRSYWARPLPATIVMRAGEQTQFRVHVTDGAPADVWLQLEDGTTRAEVVQVDNFTPPFDLDGRWIGEASFVLPADLPLGYHRVNLRSGDSQASAAVVVTPDWLGLPDKLAGRRAWGLAVQLYSVRSRQSWGIGDLTDLANLALWSASAHGAGYVLVNPLHAATLPGPAGRSKPIEPSPYLPTSRRFVNPLYLRVEAIPELVDLPKRGRVQRLRTNVQQHADQLDTIDRDSAWAAKRAALKLVHRVPRSAGRELAYAAFRTREGRALDDFATWCALAETYGDDWHRWPKSLRHPDASGVADFVDKHADAVDFHRWLQWQLDEQLASAQSQALRAGMSLGIMADLAVGVHPNGADAWALQDVLAQGVTAGAPPDEFNQLGQDWSQPPWRPDRLAEQEYRPFRALIQAALRHAGAVRIDHIIGLFRLWWIPDGAPPTQGTYVRYDHDAMIGIVALEAHRAGAVVVGEDLGTVEPWVRDYLLLRGLLGTSILWFEQDRDCGPAGTPLPAERWREYCLSSVTTHDLPPTAGYLAGDQVRLRESLGLLTNPVEAELESARADRAAWMAELRRVGLLADGAEPDSEEAVLALYRYLGRTPSRLLAVALTDAVGDRRTQNQPGTTDEYPNWRVPLTGPDGQPMLLEDIFTDRRAATLAEAVRAATTSPMSCW.

It belongs to the disproportionating enzyme family.

Its subcellular location is the cytoplasm. It catalyses the reaction Transfers a segment of a (1-&gt;4)-alpha-D-glucan to a new position in an acceptor, which may be glucose or a (1-&gt;4)-alpha-D-glucan.. This chain is 4-alpha-glucanotransferase (malQ), found in Mycobacterium bovis (strain ATCC BAA-935 / AF2122/97).